Reading from the N-terminus, the 261-residue chain is Acidic leucine-rich nuclear phosphoprotein 32 family member A (261 aa).

4 LRR repeats span residues 16 to 37 (QITELNLDNCRSTSIVGLTDEY), 39 to 60 (ALESLSLINVGLTTLKGFPKLP), 61 to 83 (NLKKLELSDNRISSGLNYLTTSP), and 84 to 105 (KLQYLNLSGNKIKDLETLKPLE). The LRRCT domain maps to 118–156 (NDATQVDNYREKIFKMLPSLNFLDGFDCNDEEVQSDGDD). 2 stretches are compositionally biased toward acidic residues: residues 145–185 (CNDE…EEAN) and 194–229 (YNDDLEEDNSDWEGEDEAGEEDEEEDSDIDDADGDA). The disordered stretch occupies residues 145-261 (CNDEEVQSDG…VRGKKRKHDG (117 aa)). Residues 238–252 (AKDKDGEKEADESQV) show a composition bias toward basic and acidic residues.

Belongs to the ANP32 family. In terms of processing, phosphorylated on serine residues.

The protein resides in the nucleus. It is found in the cytoplasm. Its function is as follows. Implicated in a number of cellular processes, including proliferation, differentiation, caspase-dependent and caspase-independent apoptosis, suppression of transformation (tumor suppressor), inhibition of protein phosphatase 2A, regulation of mRNA trafficking and stability, and inhibition of acetyltransferases as part of the INHAT (inhibitor of histone acetyltransferases) complex. The protein is Acidic leucine-rich nuclear phosphoprotein 32 family member A (Anp32a) of Drosophila melanogaster (Fruit fly).